Here is a 271-residue protein sequence, read N- to C-terminus: Thiazole synthase (271 aa).

Residue K104 is the Schiff-base intermediate with DXP of the active site. 1-deoxy-D-xylulose 5-phosphate contacts are provided by residues G165, 192-193 (AG), and 214-215 (NT).

This sequence belongs to the ThiG family. In terms of assembly, homotetramer. Forms heterodimers with either ThiH or ThiS.

The protein resides in the cytoplasm. It catalyses the reaction [ThiS sulfur-carrier protein]-C-terminal-Gly-aminoethanethioate + 2-iminoacetate + 1-deoxy-D-xylulose 5-phosphate = [ThiS sulfur-carrier protein]-C-terminal Gly-Gly + 2-[(2R,5Z)-2-carboxy-4-methylthiazol-5(2H)-ylidene]ethyl phosphate + 2 H2O + H(+). It functions in the pathway cofactor biosynthesis; thiamine diphosphate biosynthesis. In terms of biological role, catalyzes the rearrangement of 1-deoxy-D-xylulose 5-phosphate (DXP) to produce the thiazole phosphate moiety of thiamine. Sulfur is provided by the thiocarboxylate moiety of the carrier protein ThiS. In vitro, sulfur can be provided by H(2)S. The sequence is that of Thiazole synthase from Burkholderia mallei (strain ATCC 23344).